Reading from the N-terminus, the 452-residue chain is tRNA modification GTPase MnmE (452 aa).

The (6S)-5-formyl-5,6,7,8-tetrahydrofolate site is built by Arg23, Glu81, and Lys120. Residues 217–373 (GIKTAIIGQT…LVLRINQMYL (157 aa)) form the TrmE-type G domain. Asn227 contacts K(+). Residues 227-232 (NVGKSS), 246-252 (TDIPGTT), and 271-274 (DTAG) each bind GTP. A Mg(2+)-binding site is contributed by Ser231. K(+)-binding residues include Thr246, Ile248, and Thr251. Thr252 contributes to the Mg(2+) binding site. Position 452 (Lys452) interacts with (6S)-5-formyl-5,6,7,8-tetrahydrofolate.

Belongs to the TRAFAC class TrmE-Era-EngA-EngB-Septin-like GTPase superfamily. TrmE GTPase family. In terms of assembly, homodimer. Heterotetramer of two MnmE and two MnmG subunits. K(+) serves as cofactor.

The protein resides in the cytoplasm. Its function is as follows. Exhibits a very high intrinsic GTPase hydrolysis rate. Involved in the addition of a carboxymethylaminomethyl (cmnm) group at the wobble position (U34) of certain tRNAs, forming tRNA-cmnm(5)s(2)U34. The polypeptide is tRNA modification GTPase MnmE (Mycoplasma mycoides subsp. mycoides SC (strain CCUG 32753 / NCTC 10114 / PG1)).